The primary structure comprises 178 residues: MVSRVAKNPIKIPTGVEVNVAGQQITVKGKLGTLTRVIHRAVKVTKTDAELQTICANDSPGSNALAGTARAVLANMVQGVHTGFQRKLVMVGVGYRAKAEGKKLNLTVGLSHPVNIEMPEGITVETPSQTEIIVKGADKQRVSQVAANIREIRPPEPYKGKGIRYDNERVILKEAKKK.

Belongs to the universal ribosomal protein uL6 family. In terms of assembly, part of the 50S ribosomal subunit.

Functionally, this protein binds to the 23S rRNA, and is important in its secondary structure. It is located near the subunit interface in the base of the L7/L12 stalk, and near the tRNA binding site of the peptidyltransferase center. The protein is Large ribosomal subunit protein uL6 of Coxiella burnetii (strain CbuK_Q154) (Coxiella burnetii (strain Q154)).